The sequence spans 387 residues: Eukaryotic translation initiation factor 3 subunit M (387 aa).

In terms of domain architecture, PCI spans 181–340; the sequence is RSSKVMIELL…RKVHISSTMH (160 aa).

The protein belongs to the eIF-3 subunit M family. In terms of assembly, component of the eukaryotic translation initiation factor 3 (eIF-3) complex. The eIF-3 complex interacts with pix.

Its subcellular location is the cytoplasm. The protein localises to the golgi apparatus. Its function is as follows. Component of the eukaryotic translation initiation factor 3 (eIF-3) complex, which is involved in protein synthesis of a specialized repertoire of mRNAs and, together with other initiation factors, stimulates binding of mRNA and methionyl-tRNAi to the 40S ribosome. The eIF-3 complex specifically targets and initiates translation of a subset of mRNAs involved in cell proliferation. In Drosophila willistoni (Fruit fly), this protein is Eukaryotic translation initiation factor 3 subunit M.